A 101-amino-acid polypeptide reads, in one-letter code: Integration host factor subunit alpha (101 aa).

The protein belongs to the bacterial histone-like protein family. As to quaternary structure, heterodimer of an alpha and a beta chain.

This protein is one of the two subunits of integration host factor, a specific DNA-binding protein that functions in genetic recombination as well as in transcriptional and translational control. This chain is Integration host factor subunit alpha, found in Halorhodospira halophila (strain DSM 244 / SL1) (Ectothiorhodospira halophila (strain DSM 244 / SL1)).